The primary structure comprises 107 residues: Putative double-stranded DNA mimic protein CGSHiGG_01135 (107 aa).

This sequence belongs to the putative dsDNA mimic protein family.

Functionally, may act as a double-stranded DNA (dsDNA) mimic. Probably regulates the activity of a dsDNA-binding protein. The polypeptide is Putative double-stranded DNA mimic protein CGSHiGG_01135 (Haemophilus influenzae (strain PittGG)).